A 306-amino-acid polypeptide reads, in one-letter code: Aspartate carbamoyltransferase catalytic subunit (306 aa).

Residues Arg-55 and Thr-56 each coordinate carbamoyl phosphate. Residue Lys-84 participates in L-aspartate binding. Carbamoyl phosphate is bound by residues Arg-105, His-133, and Gln-136. L-aspartate contacts are provided by Arg-166 and Arg-227. Residues Leu-265 and Pro-266 each contribute to the carbamoyl phosphate site.

It belongs to the aspartate/ornithine carbamoyltransferase superfamily. ATCase family. As to quaternary structure, heterododecamer (2C3:3R2) of six catalytic PyrB chains organized as two trimers (C3), and six regulatory PyrI chains organized as three dimers (R2).

The catalysed reaction is carbamoyl phosphate + L-aspartate = N-carbamoyl-L-aspartate + phosphate + H(+). Its pathway is pyrimidine metabolism; UMP biosynthesis via de novo pathway; (S)-dihydroorotate from bicarbonate: step 2/3. Functionally, catalyzes the condensation of carbamoyl phosphate and aspartate to form carbamoyl aspartate and inorganic phosphate, the committed step in the de novo pyrimidine nucleotide biosynthesis pathway. In Aeromonas salmonicida (strain A449), this protein is Aspartate carbamoyltransferase catalytic subunit.